Reading from the N-terminus, the 209-residue chain is Bacteriorhodopsin (209 aa).

Residues 1–17 (LWLGTAGMFLGMLYFIA) form a helical membrane-spanning segment. Residues 18-31 (RGWGETDGRRQKFY) are Cytoplasmic-facing. Residues 32–50 (IATILITAIAFVNYLAMAL) form a helical membrane-spanning segment. Residues 51–66 (GFGLTFIEFGGEQHPI) are Extracellular-facing. The helical transmembrane segment at 67–84 (YWARYTDWLFTTPLLLYD) threads the bilayer. Topologically, residues 85 to 95 (LGLLAGADRNT) are cytoplasmic. A helical transmembrane segment spans residues 96–115 (IYSLVSLDVLMIGTGVVATL). Over 116–128 (SAGSGVLSAGAER) the chain is Extracellular. A helical transmembrane segment spans residues 129 to 148 (LVWWGISTAFLLVLLYFLFS). Topologically, residues 149 to 166 (SLSGRVANLPSDTRSTFK) are cytoplasmic. The helical transmembrane segment at 167-185 (TLRNLVTVVWLVYPVWWLV) threads the bilayer. At 186–197 (GSEGLGLVGIGI) the chain is on the extracellular side. The chain crosses the membrane as a helical span at residues 198–209 (ETAGFMVIDLVA).

The protein belongs to the archaeal/bacterial/fungal opsin family.

It is found in the cell membrane. Light-driven proton pump. In Halobacterium halobium (strain shark), this protein is Bacteriorhodopsin (bop).